The following is a 160-amino-acid chain: Sodium/proline symporter (160 aa).

Transmembrane regions (helical) follow at residues 6 to 26 (PMLV…FIAW) and 68 to 88 (IFIS…GAWI).

It belongs to the sodium:solute symporter (SSF) (TC 2.A.21) family.

Its subcellular location is the cell inner membrane. It catalyses the reaction L-proline(in) + Na(+)(in) = L-proline(out) + Na(+)(out). Its function is as follows. Catalyzes the sodium-dependent uptake of extracellular L-proline. In Klebsiella oxytoca, this protein is Sodium/proline symporter.